The primary structure comprises 226 residues: Phosphoribosylformylglycinamidine synthase subunit PurQ (226 aa).

The Glutamine amidotransferase type-1 domain maps to 2-226 (KIAVVVFPGS…LENGRIKVEA (225 aa)). Cys-86 acts as the Nucleophile in catalysis. Residues His-195 and Glu-197 contribute to the active site.

In terms of assembly, part of the FGAM synthase complex composed of 1 PurL, 1 PurQ and 2 PurS subunits.

It localises to the cytoplasm. It carries out the reaction N(2)-formyl-N(1)-(5-phospho-beta-D-ribosyl)glycinamide + L-glutamine + ATP + H2O = 2-formamido-N(1)-(5-O-phospho-beta-D-ribosyl)acetamidine + L-glutamate + ADP + phosphate + H(+). The enzyme catalyses L-glutamine + H2O = L-glutamate + NH4(+). Its pathway is purine metabolism; IMP biosynthesis via de novo pathway; 5-amino-1-(5-phospho-D-ribosyl)imidazole from N(2)-formyl-N(1)-(5-phospho-D-ribosyl)glycinamide: step 1/2. Its function is as follows. Part of the phosphoribosylformylglycinamidine synthase complex involved in the purines biosynthetic pathway. Catalyzes the ATP-dependent conversion of formylglycinamide ribonucleotide (FGAR) and glutamine to yield formylglycinamidine ribonucleotide (FGAM) and glutamate. The FGAM synthase complex is composed of three subunits. PurQ produces an ammonia molecule by converting glutamine to glutamate. PurL transfers the ammonia molecule to FGAR to form FGAM in an ATP-dependent manner. PurS interacts with PurQ and PurL and is thought to assist in the transfer of the ammonia molecule from PurQ to PurL. The polypeptide is Phosphoribosylformylglycinamidine synthase subunit PurQ (Limosilactobacillus reuteri (strain DSM 20016) (Lactobacillus reuteri)).